The following is a 1077-amino-acid chain: Eukaryotic translation initiation factor 2-alpha kinase pek-1 (1077 aa).

The first 23 residues, 1-23 (MSVYYIVLAGFLLFMALVPFNAG), serve as a signal peptide directing secretion. Residues 24 to 453 (QQYIDDDIEV…ITLMQTIFSY (430 aa)) are Lumenal-facing. Asn206 carries an N-linked (GlcNAc...) asparagine glycan. A helical membrane pass occupies residues 454 to 474 (IFNPTAVVSFLAGLIGVTVAV). The Cytoplasmic portion of the chain corresponds to 475-1077 (VYNKIAKSSP…HEVATHKFLQ (603 aa)). The 473-residue stretch at 604 to 1076 (FEVKKVIGHG…AHEVATHKFL (473 aa)) folds into the Protein kinase domain. ATP contacts are provided by residues 610 to 618 (IGHGGFGVV) and Lys633. A disordered region spans residues 727-834 (MPPVVGNTTD…FVDGSDDVDN (108 aa)). The span at 732–746 (GNTTDAENSWSTSAK) shows a compositional bias: polar residues. Residues 766–778 (GSDRTTAELKEES) show a composition bias toward basic and acidic residues. The segment covering 783–796 (ESDEESDTTEDSSS) has biased composition (acidic residues). Positions 797-808 (SDESPSSSSGSS) are enriched in low complexity. Asp933 functions as the Proton acceptor in the catalytic mechanism.

This sequence belongs to the protein kinase superfamily. Ser/Thr protein kinase family. GCN2 subfamily. As to quaternary structure, forms dimers with HSPA5/BIP in resting cells. Oligomerizes in ER-stressed cells. Autophosphorylated. Post-translationally, N-glycosylated. As to expression, expressed in intestinal cells.

The protein resides in the endoplasmic reticulum membrane. It carries out the reaction L-seryl-[protein] + ATP = O-phospho-L-seryl-[protein] + ADP + H(+). It catalyses the reaction L-threonyl-[protein] + ATP = O-phospho-L-threonyl-[protein] + ADP + H(+). With respect to regulation, perturbation in protein folding in the endoplasmic reticulum (ER) promotes reversible dissociation from HSPA5/BIP and oligomerization, resulting in transautophosphorylation and kinase activity induction. Functionally, phosphorylates the alpha subunit of eukaryotic translation-initiation factor 2 (eIF2alpha), leading to its inactivation and thus to a rapid reduction of translational initiation and repression of global protein synthesis. May phosphorylate eIF2alpha during hypoxia. Proposed to have a role in alleviating endoplasmic reticulum stress. In Caenorhabditis elegans, this protein is Eukaryotic translation initiation factor 2-alpha kinase pek-1 (pek-1).